A 179-amino-acid chain; its full sequence is Cell division protein SepF (179 aa).

Positions 18–57 (EDSTVPYEKGNEPVFTPVNSSQEPDLPMNQPSQSAGAKDS) are disordered. Positions 34 to 57 (PVNSSQEPDLPMNQPSQSAGAKDS) are enriched in polar residues.

This sequence belongs to the SepF family. Homodimer. Interacts with FtsZ.

Its subcellular location is the cytoplasm. Its function is as follows. Cell division protein that is part of the divisome complex and is recruited early to the Z-ring. Probably stimulates Z-ring formation, perhaps through the cross-linking of FtsZ protofilaments. Its function overlaps with FtsA. The chain is Cell division protein SepF from Streptococcus pneumoniae (strain Hungary19A-6).